We begin with the raw amino-acid sequence, 246 residues long: Dihydromethanopterin reductase (acceptor) (246 aa).

2 consecutive 4Fe-4S ferredoxin-type domains span residues 150-178 (LPYA…VKRD) and 179-208 (NFVE…EGKE). Cys159, Cys162, Cys165, Cys169, Cys188, Cys191, Cys194, and Cys198 together coordinate [4Fe-4S] cluster.

As to quaternary structure, homodimer. Requires [4Fe-4S] cluster as cofactor.

The catalysed reaction is 5,6,7,8-tetrahydromethanopterin + A = 7,8-dihydromethanopterin + AH2. The protein operates within cofactor biosynthesis; 5,6,7,8-tetrahydromethanopterin biosynthesis. Functionally, involved in the biosynthesis of tetrahydromethanopterin, a coenzyme used in methanogenesis. Catalyzes the reduction of dihydromethanopterin (H(2)MPT) to tetrahydromethanopterin (H(4)MPT). Ferredoxin may serve as an electron donor. The chain is Dihydromethanopterin reductase (acceptor) from Methanocaldococcus jannaschii (strain ATCC 43067 / DSM 2661 / JAL-1 / JCM 10045 / NBRC 100440) (Methanococcus jannaschii).